Consider the following 316-residue polypeptide: Acetyl-coenzyme A carboxylase carboxyl transferase subunit alpha (316 aa).

Residues K40–E290 form the CoA carboxyltransferase C-terminal domain.

It belongs to the AccA family. Acetyl-CoA carboxylase is a heterohexamer composed of biotin carboxyl carrier protein (AccB), biotin carboxylase (AccC) and two subunits each of ACCase subunit alpha (AccA) and ACCase subunit beta (AccD).

The protein localises to the cytoplasm. It carries out the reaction N(6)-carboxybiotinyl-L-lysyl-[protein] + acetyl-CoA = N(6)-biotinyl-L-lysyl-[protein] + malonyl-CoA. Its pathway is lipid metabolism; malonyl-CoA biosynthesis; malonyl-CoA from acetyl-CoA: step 1/1. Component of the acetyl coenzyme A carboxylase (ACC) complex. First, biotin carboxylase catalyzes the carboxylation of biotin on its carrier protein (BCCP) and then the CO(2) group is transferred by the carboxyltransferase to acetyl-CoA to form malonyl-CoA. The sequence is that of Acetyl-coenzyme A carboxylase carboxyl transferase subunit alpha from Acidithiobacillus ferrooxidans (strain ATCC 23270 / DSM 14882 / CIP 104768 / NCIMB 8455) (Ferrobacillus ferrooxidans (strain ATCC 23270)).